Consider the following 210-residue polypeptide: Peptidyl-tRNA hydrolase (210 aa).

TRNA is bound at residue tyrosine 15. The active-site Proton acceptor is histidine 20. Residues phenylalanine 66, asparagine 68, and asparagine 114 each coordinate tRNA. Positions 186–210 are disordered; sequence IHTSKPPRPKPPRREPGDGGTPATA.

This sequence belongs to the PTH family. Monomer.

The protein resides in the cytoplasm. It catalyses the reaction an N-acyl-L-alpha-aminoacyl-tRNA + H2O = an N-acyl-L-amino acid + a tRNA + H(+). In terms of biological role, hydrolyzes ribosome-free peptidyl-tRNAs (with 1 or more amino acids incorporated), which drop off the ribosome during protein synthesis, or as a result of ribosome stalling. Catalyzes the release of premature peptidyl moieties from peptidyl-tRNA molecules trapped in stalled 50S ribosomal subunits, and thus maintains levels of free tRNAs and 50S ribosomes. This is Peptidyl-tRNA hydrolase from Variovorax paradoxus (strain S110).